The chain runs to 252 residues: Accessory gland protein Acp32CD (252 aa).

Residues 1–19 form the signal peptide; the sequence is MWRMRMRLLTGYLVLLALG. The interval 42–252 is disordered; that stretch reads PDGEGGTGVD…GAKEDDYEEM (211 aa). The segment covering 44 to 69 has biased composition (gly residues); that stretch reads GEGGTGVDGGGGGAGGGAAGPGGGTG. 4 stretches are compositionally biased toward basic and acidic residues: residues 104 to 122, 142 to 153, 159 to 171, and 209 to 225; these read AIGK…DSKD, SDSKDAKDRQDK, QEGK…HHSS, and NGAR…KEVA.

In terms of tissue distribution, seminal fluid.

Its subcellular location is the secreted. Functionally, responsible for physiological and behavioral changes in mated female flies. This Drosophila melanogaster (Fruit fly) protein is Accessory gland protein Acp32CD (Acp32CD).